The chain runs to 560 residues: Cytosolic purine 5'-nucleotidase (560 aa).

The active-site Nucleophile is Asp-52. The IMP site is built by Asp-52 and Asp-54. Residues Asp-52 and Asp-54 each contribute to the Mg(2+) site. Asp-54 serves as the catalytic Proton donor. Positions 144 and 154 each coordinate ATP. IMP is bound by residues Arg-202, Asp-206, Lys-215, Thr-249, Asn-250, Ser-251, and Lys-292. Asp-351 is a Mg(2+) binding site. Position 418 is a phosphoserine (Ser-418). The ATP site is built by Gln-453 and Arg-456. Phosphoserine occurs at positions 502, 511, and 527. A disordered region spans residues 541–560 (PQEITHCHDEDDDEEEEEEE). The tract at residues 548 to 560 (HDEDDDEEEEEEE) is required for tetramer assembly. Acidic residues predominate over residues 550-560 (EDDDEEEEEEE).

The protein belongs to the 5'(3')-deoxyribonucleotidase family. In terms of assembly, homotetramer. Requires Mg(2+) as cofactor.

The protein localises to the cytoplasm. Its subcellular location is the cytosol. The catalysed reaction is a ribonucleoside 5'-phosphate + H2O = a ribonucleoside + phosphate. It carries out the reaction a 2'-deoxyribonucleoside + a ribonucleoside 5'-phosphate = a ribonucleoside + a 2'-deoxyribonucleoside 5'-phosphate. The enzyme catalyses IMP + H2O = inosine + phosphate. It catalyses the reaction GMP + H2O = guanosine + phosphate. The catalysed reaction is dGMP + H2O = 2'-deoxyguanosine + phosphate. It carries out the reaction dIMP + H2O = 2'-deoxyinosine + phosphate. The enzyme catalyses XMP + H2O = xanthosine + phosphate. It catalyses the reaction inosine + GMP = guanosine + IMP. The catalysed reaction is dGMP + inosine = 2'-deoxyguanosine + IMP. It carries out the reaction dIMP + inosine = 2'-deoxyinosine + IMP. The enzyme catalyses inosine + UMP = uridine + IMP. It catalyses the reaction inosine + CMP = cytidine + IMP. The catalysed reaction is inosine + AMP = IMP + adenosine. Allosterically activated by various compounds including ATP, 2,3-BPG/2,3-Bisphosphoglyceric acid and Ap4A/P1,P4-bis(5'-adenosyl) tetraphosphate. Binding of an allosteric activator is a prerequisiste to magnesium and substrate binding. Inhibited by inorganic phosphate. Its function is as follows. Broad specificity cytosolic 5'-nucleotidase that catalyzes the dephosphorylation of 6-hydroxypurine nucleoside 5'-monophosphates. In addition, possesses a phosphotransferase activity by which it can transfer a phosphate from a donor nucleoside monophosphate to an acceptor nucleoside, preferably inosine, deoxyinosine and guanosine. Has the highest activities for IMP and GMP followed by dIMP, dGMP and XMP. Could also catalyze the transfer of phosphates from pyrimidine monophosphates but with lower efficiency. Through these activities regulates the purine nucleoside/nucleotide pools within the cell. The protein is Cytosolic purine 5'-nucleotidase of Mus musculus (Mouse).